A 69-amino-acid polypeptide reads, in one-letter code: DNA gyrase inhibitor YacG (69 aa).

Positions 13, 16, 32, and 36 each coordinate Zn(2+).

The protein belongs to the DNA gyrase inhibitor YacG family. Interacts with GyrB. Requires Zn(2+) as cofactor.

Functionally, inhibits all the catalytic activities of DNA gyrase by preventing its interaction with DNA. Acts by binding directly to the C-terminal domain of GyrB, which probably disrupts DNA binding by the gyrase. The polypeptide is DNA gyrase inhibitor YacG (Neisseria gonorrhoeae (strain ATCC 700825 / FA 1090)).